A 140-amino-acid polypeptide reads, in one-letter code: Protein PsiE homolog (140 aa).

Helical transmembrane passes span I16–F36, Y57–I77, H85–I105, and P110–A130.

It belongs to the PsiE family.

It is found in the cell membrane. This is Protein PsiE homolog from Bacillus cereus (strain ATCC 14579 / DSM 31 / CCUG 7414 / JCM 2152 / NBRC 15305 / NCIMB 9373 / NCTC 2599 / NRRL B-3711).